The chain runs to 449 residues: NADH-quinone oxidoreductase subunit H (449 aa).

The next 9 helical transmembrane spans lie at 23-43 (WWVI…LTLF), 93-113 (AVYL…FSVI), 137-157 (VAVL…VLGG), 176-196 (MISY…YAGS), 209-229 (LWYG…MVGE), 258-280 (ALFF…TLFL), 300-320 (YWPL…FIWL), 332-352 (FMAF…VAVA), and 368-388 (LLIG…IGGA). Residues 427–442 (RSSPIASSMPQPSAAT) are compositionally biased toward polar residues. The interval 427 to 449 (RSSPIASSMPQPSAATRSAGEEI) is disordered.

It belongs to the complex I subunit 1 family. NDH-1 is composed of 14 different subunits. Subunits NuoA, H, J, K, L, M, N constitute the membrane sector of the complex.

The protein resides in the cell membrane. The enzyme catalyses a quinone + NADH + 5 H(+)(in) = a quinol + NAD(+) + 4 H(+)(out). NDH-1 shuttles electrons from NADH, via FMN and iron-sulfur (Fe-S) centers, to quinones in the respiratory chain. The immediate electron acceptor for the enzyme in this species is believed to be ubiquinone. Couples the redox reaction to proton translocation (for every two electrons transferred, four hydrogen ions are translocated across the cytoplasmic membrane), and thus conserves the redox energy in a proton gradient. This subunit may bind ubiquinone. In Nocardioides sp. (strain ATCC BAA-499 / JS614), this protein is NADH-quinone oxidoreductase subunit H.